Consider the following 203-residue polypeptide: Suppressor/enhancer of lin-12 protein 9 (203 aa).

Residues 1-18 (MNSLTWILAVLFVTPAAS) form the signal peptide. Topologically, residues 19–170 (YFIHVDANEE…RNINENTNSR (152 aa)) are lumenal. In terms of domain architecture, GOLD spans 28–110 (EQCFFDRLTS…PKAVMFTVEI (83 aa)). Residues 171 to 191 (VVMWAAFEAFVLVGMTVGQIF) traverse the membrane as a helical segment. Topologically, residues 192 to 203 (YLKRFFEVRTMV) are cytoplasmic.

It belongs to the EMP24/GP25L family.

It localises to the cytoplasmic vesicle membrane. The protein resides in the cytoplasmic vesicle. It is found in the COPI-coated vesicle membrane. Its subcellular location is the golgi apparatus membrane. Functionally, may have a role in the negative regulation of lin-12 and glp-1 transport to the cell surface. May also have a role in a quality control mechanism for endoplasmic reticulum-Golgi transport; the budding of coatomer-coated and other species of coated vesicles, could bind cargo molecules to collect them into budding vesicles. Involved in regulating the expression of proteasomal subunits such as rpt-3 in order to confer resistance to proteasomal dysfunction. The chain is Suppressor/enhancer of lin-12 protein 9 (sel-9) from Caenorhabditis elegans.